The following is a 188-amino-acid chain: NAD(P)H-quinone oxidoreductase subunit J (188 aa).

The protein belongs to the complex I 30 kDa subunit family. NDH-1 can be composed of about 15 different subunits; different subcomplexes with different compositions have been identified which probably have different functions.

It localises to the cellular thylakoid membrane. It carries out the reaction a plastoquinone + NADH + (n+1) H(+)(in) = a plastoquinol + NAD(+) + n H(+)(out). It catalyses the reaction a plastoquinone + NADPH + (n+1) H(+)(in) = a plastoquinol + NADP(+) + n H(+)(out). In terms of biological role, NDH-1 shuttles electrons from an unknown electron donor, via FMN and iron-sulfur (Fe-S) centers, to quinones in the respiratory and/or the photosynthetic chain. The immediate electron acceptor for the enzyme in this species is believed to be plastoquinone. Couples the redox reaction to proton translocation, and thus conserves the redox energy in a proton gradient. Cyanobacterial NDH-1 also plays a role in inorganic carbon-concentration. This chain is NAD(P)H-quinone oxidoreductase subunit J, found in Parasynechococcus marenigrum (strain WH8102).